Consider the following 483-residue polypeptide: UDP-N-acetylmuramoyl-L-alanyl-D-glutamate--2,6-diaminopimelate ligase (483 aa).

UDP-N-acetyl-alpha-D-muramoyl-L-alanyl-D-glutamate is bound at residue Ser-30. 109–115 (GTNGKTT) contacts ATP. Residues 151-152 (TT), Ser-178, and Arg-186 contribute to the UDP-N-acetyl-alpha-D-muramoyl-L-alanyl-D-glutamate site. Lys-218 carries the N6-carboxylysine modification. Meso-2,6-diaminopimelate-binding positions include Arg-380, 403–406 (DNPR), Gly-453, and Glu-457. A Meso-diaminopimelate recognition motif motif is present at residues 403 to 406 (DNPR).

Belongs to the MurCDEF family. MurE subfamily. Mg(2+) serves as cofactor. Post-translationally, carboxylation is probably crucial for Mg(2+) binding and, consequently, for the gamma-phosphate positioning of ATP.

It is found in the cytoplasm. It carries out the reaction UDP-N-acetyl-alpha-D-muramoyl-L-alanyl-D-glutamate + meso-2,6-diaminopimelate + ATP = UDP-N-acetyl-alpha-D-muramoyl-L-alanyl-gamma-D-glutamyl-meso-2,6-diaminopimelate + ADP + phosphate + H(+). Its pathway is cell wall biogenesis; peptidoglycan biosynthesis. Catalyzes the addition of meso-diaminopimelic acid to the nucleotide precursor UDP-N-acetylmuramoyl-L-alanyl-D-glutamate (UMAG) in the biosynthesis of bacterial cell-wall peptidoglycan. The protein is UDP-N-acetylmuramoyl-L-alanyl-D-glutamate--2,6-diaminopimelate ligase of Chlamydia trachomatis serovar A (strain ATCC VR-571B / DSM 19440 / HAR-13).